Here is a 668-residue protein sequence, read N- to C-terminus: Exoribonuclease 2 (668 aa).

Residues 193–521 (RIEMTHVPFV…INHRMLKAVI (329 aa)) enclose the RNB domain. Residues 568–650 (QTCFTGEIFD…ENRSLVAKPT (83 aa)) form the S1 motif domain.

The protein belongs to the RNR ribonuclease family. RNase II subfamily.

Its subcellular location is the cytoplasm. It catalyses the reaction Exonucleolytic cleavage in the 3'- to 5'-direction to yield nucleoside 5'-phosphates.. Involved in mRNA degradation. Hydrolyzes single-stranded polyribonucleotides processively in the 3' to 5' direction. The polypeptide is Exoribonuclease 2 (Vibrio parahaemolyticus serotype O3:K6 (strain RIMD 2210633)).